A 436-amino-acid chain; its full sequence is Hydrogenobyrinate a,c-diamide synthase (436 aa).

The GATase cobBQ-type domain occupies 244–435; the sequence is RIAVARDDAF…MHVIDFSGEA (192 aa). Residue cysteine 327 is the Nucleophile of the active site.

Belongs to the CobB/CbiA family. Mg(2+) serves as cofactor.

The enzyme catalyses hydrogenobyrinate + 2 L-glutamine + 2 ATP + 2 H2O = hydrogenobyrinate a,c-diamide + 2 L-glutamate + 2 ADP + 2 phosphate + 2 H(+). It participates in cofactor biosynthesis; adenosylcobalamin biosynthesis; cob(II)yrinate a,c-diamide from precorrin-2 (aerobic route): step 9/10. Functionally, catalyzes the ATP-dependent amidation of the two carboxylate groups at positions a and c of hydrogenobyrinate, using either L-glutamine or ammonia as the nitrogen source. The polypeptide is Hydrogenobyrinate a,c-diamide synthase (Brucella ovis (strain ATCC 25840 / 63/290 / NCTC 10512)).